The primary structure comprises 338 residues: Nicotinate-nucleotide--dimethylbenzimidazole phosphoribosyltransferase (338 aa).

The Proton acceptor role is filled by glutamate 305.

Belongs to the CobT family.

The enzyme catalyses 5,6-dimethylbenzimidazole + nicotinate beta-D-ribonucleotide = alpha-ribazole 5'-phosphate + nicotinate + H(+). The protein operates within nucleoside biosynthesis; alpha-ribazole biosynthesis; alpha-ribazole from 5,6-dimethylbenzimidazole: step 1/2. In terms of biological role, catalyzes the synthesis of alpha-ribazole-5'-phosphate from nicotinate mononucleotide (NAMN) and 5,6-dimethylbenzimidazole (DMB). This is Nicotinate-nucleotide--dimethylbenzimidazole phosphoribosyltransferase from Novosphingobium aromaticivorans (strain ATCC 700278 / DSM 12444 / CCUG 56034 / CIP 105152 / NBRC 16084 / F199).